Consider the following 165-residue polypeptide: Deoxyuridine 5'-triphosphate nucleotidohydrolase (165 aa).

It belongs to the dUTPase family. As to quaternary structure, homotrimer. The cofactor is Mg(2+).

The protein localises to the host cytoplasm. It is found in the virion. It catalyses the reaction dUTP + H2O = dUMP + diphosphate + H(+). In terms of biological role, the viral dUTPase may play a role in lowering the dUTP concentration in natural infections to minimize misincorporation of deoxyuridine into the viral DNA and ensure the fidelity of genome replication. This is Deoxyuridine 5'-triphosphate nucleotidohydrolase from African swine fever virus (isolate Tick/South Africa/Pretoriuskop Pr4/1996) (ASFV).